The primary structure comprises 115 residues: U3-lycotoxin-Ls1n (115 aa).

Positions 1–20 (MKFVLLFGVLLVTLFSYSSA) are cleaved as a signal peptide. A propeptide spanning residues 21–44 (EMLDDFDQADEDELLSLIEKEEAR) is cleaved from the precursor. 4 cysteine pairs are disulfide-bonded: cysteine 48-cysteine 63, cysteine 55-cysteine 72, cysteine 62-cysteine 87, and cysteine 74-cysteine 85.

It belongs to the neurotoxin 19 (CSTX) family. 01 subfamily. In terms of tissue distribution, expressed by the venom gland.

It localises to the secreted. The sequence is that of U3-lycotoxin-Ls1n from Lycosa singoriensis (Wolf spider).